Consider the following 135-residue polypeptide: Small ribosomal subunit protein uS9 (135 aa).

Residues 108-118 (VGDPRRTEPHK) are compositionally biased toward basic and acidic residues. The disordered stretch occupies residues 108-135 (VGDPRRTEPHKPNRSTKGPRAKRQKSYR). Over residues 119-135 (PNRSTKGPRAKRQKSYR) the composition is skewed to basic residues.

Belongs to the universal ribosomal protein uS9 family.

In Pyrococcus abyssi (strain GE5 / Orsay), this protein is Small ribosomal subunit protein uS9 (rps9).